We begin with the raw amino-acid sequence, 62 residues long: Sperm protamine P1 (62 aa).

Residues 1-62 (MARYRHSRSR…RYSRRGRRRY (62 aa)) are disordered.

Belongs to the protamine P1 family. In terms of tissue distribution, testis.

The protein localises to the nucleus. It localises to the chromosome. Its function is as follows. Protamines substitute for histones in the chromatin of sperm during the haploid phase of spermatogenesis. They compact sperm DNA into a highly condensed, stable and inactive complex. This Trichosurus vulpecula (Brush-tailed possum) protein is Sperm protamine P1 (PRM1).